Here is a 345-residue protein sequence, read N- to C-terminus: Glycerol-3-phosphate dehydrogenase [NAD(P)+] (345 aa).

NADPH-binding residues include serine 23, tyrosine 24, histidine 44, and lysine 118. Sn-glycerol 3-phosphate-binding residues include lysine 118, glycine 147, and threonine 149. Residue alanine 151 coordinates NADPH. 5 residues coordinate sn-glycerol 3-phosphate: lysine 203, aspartate 256, serine 266, arginine 267, and asparagine 268. Lysine 203 acts as the Proton acceptor in catalysis. Residue arginine 267 coordinates NADPH. NADPH-binding residues include valine 291 and glutamate 293.

It belongs to the NAD-dependent glycerol-3-phosphate dehydrogenase family.

It localises to the cytoplasm. It catalyses the reaction sn-glycerol 3-phosphate + NAD(+) = dihydroxyacetone phosphate + NADH + H(+). It carries out the reaction sn-glycerol 3-phosphate + NADP(+) = dihydroxyacetone phosphate + NADPH + H(+). It participates in membrane lipid metabolism; glycerophospholipid metabolism. Its function is as follows. Catalyzes the reduction of the glycolytic intermediate dihydroxyacetone phosphate (DHAP) to sn-glycerol 3-phosphate (G3P), the key precursor for phospholipid synthesis. The chain is Glycerol-3-phosphate dehydrogenase [NAD(P)+] from Vibrio campbellii (strain ATCC BAA-1116).